The sequence spans 29 residues: Cyclotide mobo-A (29 aa).

The segment at residues 1 to 29 (GFPTCGETCTLGTCNTPGCTCSWPICTRN) is a cross-link (cyclopeptide (Gly-Asn)). 3 cysteine pairs are disulfide-bonded: cysteine 5/cysteine 19, cysteine 9/cysteine 21, and cysteine 14/cysteine 26.

Belongs to the cyclotide family. Moebius subfamily. In terms of processing, this is a cyclic peptide.

In terms of biological role, probably participates in a plant defense mechanism. The chain is Cyclotide mobo-A from Melicytus obovatus (Hymenanthera obovata).